The chain runs to 96 residues: Co-chaperonin GroES (96 aa).

It belongs to the GroES chaperonin family. As to quaternary structure, heptamer of 7 subunits arranged in a ring. Interacts with the chaperonin GroEL.

The protein resides in the cytoplasm. Together with the chaperonin GroEL, plays an essential role in assisting protein folding. The GroEL-GroES system forms a nano-cage that allows encapsulation of the non-native substrate proteins and provides a physical environment optimized to promote and accelerate protein folding. GroES binds to the apical surface of the GroEL ring, thereby capping the opening of the GroEL channel. The sequence is that of Co-chaperonin GroES from Polynucleobacter asymbioticus (strain DSM 18221 / CIP 109841 / QLW-P1DMWA-1) (Polynucleobacter necessarius subsp. asymbioticus).